The following is a 341-amino-acid chain: Putative ankyrin repeat protein FPV031 (341 aa).

ANK repeat units lie at residues 23–55, 58–87, 92–124, 125–158, and 163–195; these read DRNS…FQET, DNLT…IINQ, CGNT…ITNN, DGFT…IRDN, and TGLT…YSTC.

The chain is Putative ankyrin repeat protein FPV031 (ANK3) from Fowlpox virus (strain NVSL) (FPV).